Consider the following 26-residue polypeptide: Conotoxin Eb6.18 (26 aa).

2 cysteine pairs are disulfide-bonded: C7-C18 and C13-C25.

It belongs to the conotoxin O1 superfamily. In terms of tissue distribution, expressed by the venom duct.

It is found in the secreted. This is Conotoxin Eb6.18 (E1) from Conus ebraeus (Hebrew cone).